The chain runs to 391 residues: Chalcone synthase (391 aa).

Cys-164 is a catalytic residue.

The protein belongs to the thiolase-like superfamily. Chalcone/stilbene synthases family.

The catalysed reaction is (E)-4-coumaroyl-CoA + 3 malonyl-CoA + 3 H(+) = 2',4,4',6'-tetrahydroxychalcone + 3 CO2 + 4 CoA. It functions in the pathway secondary metabolite biosynthesis; flavonoid biosynthesis. Functionally, the primary product of this enzyme is 4,2',4',6'-tetrahydroxychalcone (also termed naringenin-chalcone or chalcone) which can under specific conditions spontaneously isomerize into naringenin. This Dianthus monspessulanus protein is Chalcone synthase (CHS).